A 98-amino-acid chain; its full sequence is MSLVYMNIMTAFMVSLAGLLMYRSHLMSSLLCLEGMMLSLFVMATLTILNSHFTLASMMPIILLVFAACEAALGLSLLVMVSNTYGTDYVQNLNLLQC.

A run of 3 helical transmembrane segments spans residues 1–21, 29–49, and 61–81; these read MSLVYMNIMTAFMVSLAGLLM, SLLCLEGMMLSLFVMATLTIL, and IILLVFAACEAALGLSLLVMV.

This sequence belongs to the complex I subunit 4L family. Core subunit of respiratory chain NADH dehydrogenase (Complex I) which is composed of 45 different subunits.

The protein resides in the mitochondrion inner membrane. It carries out the reaction a ubiquinone + NADH + 5 H(+)(in) = a ubiquinol + NAD(+) + 4 H(+)(out). Functionally, core subunit of the mitochondrial membrane respiratory chain NADH dehydrogenase (Complex I) which catalyzes electron transfer from NADH through the respiratory chain, using ubiquinone as an electron acceptor. Part of the enzyme membrane arm which is embedded in the lipid bilayer and involved in proton translocation. This chain is NADH-ubiquinone oxidoreductase chain 4L (MT-ND4L), found in Rangifer tarandus (Reindeer).